The sequence spans 896 residues: Probable DNA-directed RNA polymerase (896 aa).

Active-site residues include aspartate 546, lysine 617, and aspartate 798.

This sequence belongs to the phage and mitochondrial RNA polymerase family.

Its subcellular location is the mitochondrion. The catalysed reaction is RNA(n) + a ribonucleoside 5'-triphosphate = RNA(n+1) + diphosphate. Its function is as follows. DNA-dependent RNA polymerase catalyzes the transcription of DNA into RNA using the four ribonucleoside triphosphates as substrates. This is Probable DNA-directed RNA polymerase from Neurospora crassa.